The chain runs to 433 residues: Peptidoglycan DD-endopeptidase ShyC (433 aa).

A helical transmembrane segment spans residues 10–30; that stretch reads WLHRVLITAFSAIIVFAIFFL. Residues H299, D303, and H380 each contribute to the Zn(2+) site.

This sequence belongs to the peptidase M23B family. Zn(2+) serves as cofactor.

It is found in the cell inner membrane. The protein operates within cell wall degradation; peptidoglycan degradation. Its activity is regulated as follows. Reduced activity in 0.5 mM EDTA and a complete loss of activity at higher EDTA concentrations. In terms of biological role, cell wall peptidoglycan (PG) DD-endopeptidase. Hydrolyzes peptide cross-links which covalently connect adjacent PG strands probably to allow insertion of new glycans and thus cell wall expansion. Degrades purified whole PG sacculi in vitro. This Vibrio cholerae serotype O1 (strain ATCC 39315 / El Tor Inaba N16961) protein is Peptidoglycan DD-endopeptidase ShyC.